A 262-amino-acid polypeptide reads, in one-letter code: Large ribosomal subunit protein eL8B (262 aa).

Positions 1–36 are disordered; sequence MAPKGKKVAPAPLATKSAKSSESKNPLFESTPKNFG.

Belongs to the eukaryotic ribosomal protein eL8 family. In terms of assembly, component of the large ribosomal subunit. Mature ribosomes consist of a small (40S) and a large (60S) subunit. The 40S subunit contains about 32 different proteins and 1 molecule of RNA (18S). The 60S subunit contains 45 different proteins and 3 molecules of RNA (25S, 5.8S and 5S).

The protein resides in the cytoplasm. Functionally, component of the ribosome, a large ribonucleoprotein complex responsible for the synthesis of proteins in the cell. The small ribosomal subunit (SSU) binds messenger RNAs (mRNAs) and translates the encoded message by selecting cognate aminoacyl-transfer RNA (tRNA) molecules. The large subunit (LSU) contains the ribosomal catalytic site termed the peptidyl transferase center (PTC), which catalyzes the formation of peptide bonds, thereby polymerizing the amino acids delivered by tRNAs into a polypeptide chain. The nascent polypeptides leave the ribosome through a tunnel in the LSU and interact with protein factors that function in enzymatic processing, targeting, and the membrane insertion of nascent chains at the exit of the ribosomal tunnel. This Candida albicans (strain SC5314 / ATCC MYA-2876) (Yeast) protein is Large ribosomal subunit protein eL8B.